The following is a 500-amino-acid chain: Lysine--tRNA ligase (500 aa).

The Mg(2+) site is built by E410 and E417.

The protein belongs to the class-II aminoacyl-tRNA synthetase family. As to quaternary structure, homodimer. The cofactor is Mg(2+).

The protein resides in the cytoplasm. It catalyses the reaction tRNA(Lys) + L-lysine + ATP = L-lysyl-tRNA(Lys) + AMP + diphosphate. This chain is Lysine--tRNA ligase, found in Shewanella frigidimarina (strain NCIMB 400).